We begin with the raw amino-acid sequence, 544 residues long: CTP synthase (544 aa).

Residues 1–267 (MAKFVFITGG…AQRVLQILNL (267 aa)) are amidoligase domain. Serine 13 lines the CTP pocket. UTP is bound at residue serine 13. An ATP-binding site is contributed by 14–19 (SIGKGI). An L-glutamine-binding site is contributed by tyrosine 54. Aspartate 71 serves as a coordination point for ATP. Residues aspartate 71 and glutamate 141 each contribute to the Mg(2+) site. CTP is bound by residues 148-150 (DIE), 188-193 (KTKPTQ), and lysine 224. UTP contacts are provided by residues 188 to 193 (KTKPTQ) and lysine 224. A Glutamine amidotransferase type-1 domain is found at 292–534 (EIAIVGKYVR…IEAALRSRSR (243 aa)). Residue glycine 354 participates in L-glutamine binding. The active-site Nucleophile; for glutamine hydrolysis is cysteine 381. Residues 382-385 (LGMQ), glutamate 405, and arginine 462 each bind L-glutamine. Catalysis depends on residues histidine 507 and glutamate 509.

The protein belongs to the CTP synthase family. Homotetramer.

The catalysed reaction is UTP + L-glutamine + ATP + H2O = CTP + L-glutamate + ADP + phosphate + 2 H(+). The enzyme catalyses L-glutamine + H2O = L-glutamate + NH4(+). It catalyses the reaction UTP + NH4(+) + ATP = CTP + ADP + phosphate + 2 H(+). It functions in the pathway pyrimidine metabolism; CTP biosynthesis via de novo pathway; CTP from UDP: step 2/2. Allosterically activated by GTP, when glutamine is the substrate; GTP has no effect on the reaction when ammonia is the substrate. The allosteric effector GTP functions by stabilizing the protein conformation that binds the tetrahedral intermediate(s) formed during glutamine hydrolysis. Inhibited by the product CTP, via allosteric rather than competitive inhibition. Its function is as follows. Catalyzes the ATP-dependent amination of UTP to CTP with either L-glutamine or ammonia as the source of nitrogen. Regulates intracellular CTP levels through interactions with the four ribonucleotide triphosphates. The sequence is that of CTP synthase from Synechococcus sp. (strain JA-3-3Ab) (Cyanobacteria bacterium Yellowstone A-Prime).